Consider the following 360-residue polypeptide: uncharacterized protein (360 aa).

The ABC transporter domain occupies 4–235 (LSLQHIQKIY…PANMFVAGFI (232 aa)). An ATP-binding site is contributed by 37 to 44 (GPSGCGKS).

It belongs to the ABC transporter superfamily.

This is an uncharacterized protein from Escherichia coli O6:K15:H31 (strain 536 / UPEC).